Consider the following 463-residue polypeptide: tRNA modification GTPase MnmE (463 aa).

Positions 29, 91, and 130 each coordinate (6S)-5-formyl-5,6,7,8-tetrahydrofolate. The TrmE-type G domain occupies 225 to 384; that stretch reads GLKVAIVGRP…LETAILEIVQ (160 aa). N235 is a binding site for K(+). Residues 235–240, 254–260, and 279–282 contribute to the GTP site; these read NVGKSS, TDLPGTT, and DTAG. S239 contributes to the Mg(2+) binding site. 3 residues coordinate K(+): T254, L256, and T259. Position 260 (T260) interacts with Mg(2+). (6S)-5-formyl-5,6,7,8-tetrahydrofolate is bound at residue K463.

The protein belongs to the TRAFAC class TrmE-Era-EngA-EngB-Septin-like GTPase superfamily. TrmE GTPase family. As to quaternary structure, homodimer. Heterotetramer of two MnmE and two MnmG subunits. K(+) serves as cofactor.

It localises to the cytoplasm. Its function is as follows. Exhibits a very high intrinsic GTPase hydrolysis rate. Involved in the addition of a carboxymethylaminomethyl (cmnm) group at the wobble position (U34) of certain tRNAs, forming tRNA-cmnm(5)s(2)U34. This is tRNA modification GTPase MnmE from Trichormus variabilis (strain ATCC 29413 / PCC 7937) (Anabaena variabilis).